The primary structure comprises 576 residues: F-actin capping regulator BSP1 (576 aa).

A disordered region spans residues 24 to 50; sequence RYSNIPSSKPAGEALSPVRSHNSGEYR. Phosphoserine occurs at positions 46, 79, and 88. 2 disordered regions span residues 132–160 and 173–316; these read NDSN…PREK and GRAD…KRIP. Ser185 carries the phosphoserine modification. Residues 191-206 show a composition bias toward basic and acidic residues; that stretch reads TRRDHIKITDGNEEKP. Phosphoserine is present on Ser220. Polar residues-rich tracts occupy residues 243–255 and 264–279; these read SRST…LSSL and KSYN…TVKS. A compositionally biased stretch (pro residues) spans 304-313; sequence KPTPPSPPAK. 2 positions are modified to phosphoserine: Ser309 and Ser320. The interval 408–470 is interaction with F-actin; the sequence is SIPEAIKGIQ…LSLRNNLKKR (63 aa). A disordered region spans residues 541–576; that stretch reads DKYTTSRDETVKETKPLVHPNKNRTRGPRRKLPTRV. Positions 544–556 are enriched in basic and acidic residues; sequence TTSRDETVKETKP. The segment at 547–576 is interaction with the F-actin capping complex; that stretch reads RDETVKETKPLVHPNKNRTRGPRRKLPTRV. Positions 561 to 576 are enriched in basic residues; sequence NKNRTRGPRRKLPTRV.

Interacts (via C-terminus) with the CAP1-CAP2 F-actin capping protein complex. Interacts with INP52 (via SAC domain); the interaction is direct. Interacts with INP53 (via SAC domain); the interaction is direct. Interacts with RVS167. Interacts with SLA1. Phosphorylated by CDC28.

The protein resides in the cytoplasm. Its subcellular location is the cytoskeleton. The protein localises to the actin patch. It is found in the cell membrane. Its function is as follows. Recruits the capping protein complex to actin patches and the actomyosin contractile ring, and/or stabilizes their interaction. May serve as an adapter to link INP52 and INP53 to the cortical actin cytoskeleton. Binds F-actin. The protein is F-actin capping regulator BSP1 (BSP1) of Saccharomyces cerevisiae (strain ATCC 204508 / S288c) (Baker's yeast).